The following is a 1499-amino-acid chain: Tyrosine-protein phosphatase non-receptor type 23 (1499 aa).

A BRO1 domain is found at 1 to 219 (LNVNLMLGQA…AKIEDKNEVL (219 aa)). TPR repeat units follow at residues 75 to 108 (AVAH…LNEA) and 199 to 232 (EEKA…DPDT). 3 coiled-coil regions span residues 278-305 (EASL…LGQA), 377-464 (KAVL…NVQY), and 506-537 (YADL…LLDR). 2 disordered regions span residues 536–583 (DREL…MMAG) and 718–1006 (HMAL…LLQP). Residues 598-993 (HFSPGPFPGS…SSSPESQHGG (396 aa)) are his. Positions 724–752 (GPAPAPPQPCFPVPQPVPQSVPQPQPLPT) are enriched in pro residues. Residues 754–763 (YTYSIGTKQH) show a composition bias toward polar residues. Arg785 carries the omega-N-methylarginine modification. 4 stretches are compositionally biased toward pro residues: residues 785-827 (RIGP…PQPQ), 856-866 (LTPPPPYPFTP), 900-909 (FPSPGPPHPH), and 934-972 (GPPP…PPPC). 20 repeat units span residues 788–789 (PQ), 790–791 (PP), 792–793 (PQ), 794–795 (LQ), 796–797 (PQ), 798–799 (PQ), 800–801 (PQ), 802–803 (PQ), 804–805 (PQ), 806–807 (PP), 808–809 (PQ), 810–811 (PQ), 812–813 (PQ), 814–815 (PQ), 816–817 (PQ), 818–819 (PQ), 820–821 (PQ), 822–823 (PQ), 824–825 (PQ), and 826–827 (PQ). Residues 788 to 827 (PQPPPQLQPQPQPQPQPQPPPQPQPQPQPQPQPQPQPQPQ) form a 20 X 2 AA approximate tandem repeats of P-Q region. 2 positions are modified to phosphoserine: Ser985 and Ser986. A Phosphothreonine modification is found at Thr994. The 261-residue stretch at 1055 to 1315 (DAVWRELQEA…KFCHEALVRH (261 aa)) folds into the Tyrosine-protein phosphatase domain. Residue Cys1255 is the Phosphocysteine intermediate of the active site. Disordered stretches follow at residues 1322–1351 (RHGV…QDLV) and 1381–1499 (ASLP…LNKT). Over residues 1335–1348 (MSVSQKSHLPQDSQ) the composition is skewed to polar residues. The segment covering 1390–1419 (PGLPPASLPEPTPAPPSSPPPPSSPLPEPP) has biased composition (pro residues). A compositionally biased stretch (low complexity) spans 1427-1450 (VPEAPSLGPPSSSLELLASLTPEA). Residues 1464–1473 (SKQNFLQAHN) are compositionally biased toward polar residues. An Omega-N-methylarginine modification is found at Arg1478. Residues 1482–1499 (PTDDPLSLLDPLWTLNKT) are compositionally biased toward low complexity.

This sequence belongs to the protein-tyrosine phosphatase family. Non-receptor class subfamily. In terms of assembly, interacts with GRAP2 and GRB2. Interacts with UBAP1 and CHMP4B. In terms of tissue distribution, ubiquitously expressed, with highest levels in brain, testis and kidney, and lowest levels in skeletal muscle.

Its subcellular location is the nucleus. The protein resides in the cytoplasm. It is found in the cytoplasmic vesicle. It localises to the endosome. The protein localises to the cytoskeleton. Its subcellular location is the cilium basal body. The catalysed reaction is O-phospho-L-tyrosyl-[protein] + H2O = L-tyrosyl-[protein] + phosphate. Functionally, plays a role in sorting of endocytic ubiquitinated cargos into multivesicular bodies (MVBs) via its interaction with the ESCRT-I complex (endosomal sorting complex required for transport I), and possibly also other ESCRT complexes. May act as a negative regulator of Ras-mediated mitogenic activity. Plays a role in ciliogenesis. The protein is Tyrosine-protein phosphatase non-receptor type 23 (Ptpn23) of Rattus norvegicus (Rat).